The sequence spans 405 residues: Deoxyguanosinetriphosphate triphosphohydrolase-like protein (405 aa).

Residues 75 to 219 (RLTHTIEVAQ…AAVADDIAYN (145 aa)) form the HD domain.

Belongs to the dGTPase family. Type 2 subfamily.

The chain is Deoxyguanosinetriphosphate triphosphohydrolase-like protein from Allorhizobium ampelinum (strain ATCC BAA-846 / DSM 112012 / S4) (Agrobacterium vitis (strain S4)).